The chain runs to 414 residues: Histidine--tRNA ligase (414 aa).

It belongs to the class-II aminoacyl-tRNA synthetase family. As to quaternary structure, homodimer.

Its subcellular location is the cytoplasm. The catalysed reaction is tRNA(His) + L-histidine + ATP = L-histidyl-tRNA(His) + AMP + diphosphate + H(+). This chain is Histidine--tRNA ligase, found in Rickettsia rickettsii (strain Iowa).